A 358-amino-acid chain; its full sequence is 4-hydroxy-3-methylbut-2-en-1-yl diphosphate synthase (flavodoxin) (358 aa).

The [4Fe-4S] cluster site is built by C264, C267, C299, and E306.

It belongs to the IspG family. [4Fe-4S] cluster serves as cofactor.

The catalysed reaction is (2E)-4-hydroxy-3-methylbut-2-enyl diphosphate + oxidized [flavodoxin] + H2O + 2 H(+) = 2-C-methyl-D-erythritol 2,4-cyclic diphosphate + reduced [flavodoxin]. Its pathway is isoprenoid biosynthesis; isopentenyl diphosphate biosynthesis via DXP pathway; isopentenyl diphosphate from 1-deoxy-D-xylulose 5-phosphate: step 5/6. In terms of biological role, converts 2C-methyl-D-erythritol 2,4-cyclodiphosphate (ME-2,4cPP) into 1-hydroxy-2-methyl-2-(E)-butenyl 4-diphosphate. This Helicobacter acinonychis (strain Sheeba) protein is 4-hydroxy-3-methylbut-2-en-1-yl diphosphate synthase (flavodoxin).